Here is a 565-residue protein sequence, read N- to C-terminus: uncharacterized protein (565 aa).

5 helical membrane-spanning segments follow: residues 14-34 (LAIF…IGKF), 36-56 (LGVV…DITV), 92-112 (MGFA…LAKI), 117-137 (VGEA…IGVA), and 157-177 (IIPV…AWVL). The region spanning 296 to 381 (PEVLDPQLLD…VDAAAKQLGY (86 aa)) is the RCK C-terminal domain. Helical transmembrane passes span 391-411 (MIFV…SIHM), 414-434 (VPIS…FGWL), 448-468 (ALWI…GIAA), 481-501 (LSLF…GILM), 508-530 (FHPA…LGAI), and 545-565 (VTYA…VLLM).

The protein belongs to the AAE transporter (TC 2.A.81) family.

It is found in the cell membrane. This is an uncharacterized protein from Bacteroides fragilis (strain YCH46).